We begin with the raw amino-acid sequence, 83 residues long: Small ribosomal subunit protein uS17 (83 aa).

This sequence belongs to the universal ribosomal protein uS17 family. Part of the 30S ribosomal subunit.

In terms of biological role, one of the primary rRNA binding proteins, it binds specifically to the 5'-end of 16S ribosomal RNA. The polypeptide is Small ribosomal subunit protein uS17 (Campylobacter hominis (strain ATCC BAA-381 / DSM 21671 / CCUG 45161 / LMG 19568 / NCTC 13146 / CH001A)).